Here is a 391-residue protein sequence, read N- to C-terminus: Phosphoglycerate kinase (391 aa).

Substrate contacts are provided by residues 21–23 (DLN), Arg-36, 59–62 (HLGR), Arg-113, and Arg-146. Residues Lys-197, Glu-319, and 345–348 (GGDT) each bind ATP.

The protein belongs to the phosphoglycerate kinase family. In terms of assembly, monomer.

Its subcellular location is the cytoplasm. The enzyme catalyses (2R)-3-phosphoglycerate + ATP = (2R)-3-phospho-glyceroyl phosphate + ADP. Its pathway is carbohydrate degradation; glycolysis; pyruvate from D-glyceraldehyde 3-phosphate: step 2/5. The polypeptide is Phosphoglycerate kinase (Xanthomonas oryzae pv. oryzae (strain PXO99A)).